The primary structure comprises 531 residues: ATP synthase subunit beta (531 aa).

Residues 1–48 (MVKAVTSSKETAKVEKKKSAPRSGVKKAVSKSQAGVKDSSSPVHKSSK) form a disordered region. Over residues 19–29 (SAPRSGVKKAV) the composition is skewed to basic residues. Residues 30–44 (SKSQAGVKDSSSPVH) show a composition bias toward polar residues. An ATP-binding site is contributed by 203 to 210 (GGAGVGKT).

The protein belongs to the ATPase alpha/beta chains family. As to quaternary structure, F-type ATPases have 2 components, CF(1) - the catalytic core - and CF(0) - the membrane proton channel. CF(1) has five subunits: alpha(3), beta(3), gamma(1), delta(1), epsilon(1). CF(0) has three main subunits: a(1), b(2) and c(9-12). The alpha and beta chains form an alternating ring which encloses part of the gamma chain. CF(1) is attached to CF(0) by a central stalk formed by the gamma and epsilon chains, while a peripheral stalk is formed by the delta and b chains.

It localises to the cell inner membrane. The enzyme catalyses ATP + H2O + 4 H(+)(in) = ADP + phosphate + 5 H(+)(out). Produces ATP from ADP in the presence of a proton gradient across the membrane. The catalytic sites are hosted primarily by the beta subunits. The sequence is that of ATP synthase subunit beta from Bartonella henselae (strain ATCC 49882 / DSM 28221 / CCUG 30454 / Houston 1) (Rochalimaea henselae).